A 212-amino-acid chain; its full sequence is Peptide methionine sulfoxide reductase MsrA (212 aa).

C52 is an active-site residue.

It belongs to the MsrA Met sulfoxide reductase family.

It carries out the reaction L-methionyl-[protein] + [thioredoxin]-disulfide + H2O = L-methionyl-(S)-S-oxide-[protein] + [thioredoxin]-dithiol. It catalyses the reaction [thioredoxin]-disulfide + L-methionine + H2O = L-methionine (S)-S-oxide + [thioredoxin]-dithiol. Functionally, has an important function as a repair enzyme for proteins that have been inactivated by oxidation. Catalyzes the reversible oxidation-reduction of methionine sulfoxide in proteins to methionine. This chain is Peptide methionine sulfoxide reductase MsrA, found in Salmonella paratyphi A (strain AKU_12601).